Consider the following 489-residue polypeptide: MSVYGLQRLYIAGAHADATSGKTFDTFDPATGELLARVQQASADDVDRAVASAREGQREWAAMTAMQRSRILRRAVELLRERNDALAELEMRDTGKPIAETRAVDIVTGADVIEYYAGLATAIEGLQVPLRPESFVYTRREPLGVCAGIGAWNYPIQIACWKSAPALAAGNAMIFKPSEVTPLSALKLAEIYTEAGVPAGVFNVVQGDGSVGALLSAHPGIAKVSFTGGVETGKKVMSLAGASSLKEVTMELGGKSPLIVFDDADLDRAADIAVTANFFSAGQVCTNGTRVFVQQAVKDAFVERVLARVARIRAGKPSDPDTNFGPLASAAQLDKVLGYIDSGKAEGAKLLAGGARLVNDHFASGQYVAPTVFGDCRDDMRIVREEIFGPVMSILSFETEDEAIARANATDYGLAAGVVTENLSRAHRAIHRLEAGICWINTWGESPAEMPVGGYKQSGVGRENGITTLEHYTRIKSVQVELGRYQPVF.

K(+) contacts are provided by T26 and D93. 150–152 (GAW) is an NAD(+) binding site. K162 acts as the Charge relay system in catalysis. Residue 176-179 (KPSE) participates in NAD(+) binding. V180 contributes to the K(+) binding site. 229–232 (GVET) lines the NAD(+) pocket. L245 is a binding site for K(+). Residue E251 is the Proton acceptor of the active site. Positions 253, 285, and 386 each coordinate NAD(+). C285 serves as the catalytic Nucleophile. At C285 the chain carries Cysteine sulfenic acid (-SOH). Positions 456 and 459 each coordinate K(+). The Charge relay system role is filled by E463.

It belongs to the aldehyde dehydrogenase family. As to quaternary structure, dimer of dimers. K(+) is required as a cofactor.

The catalysed reaction is betaine aldehyde + NAD(+) + H2O = glycine betaine + NADH + 2 H(+). It functions in the pathway amine and polyamine biosynthesis; betaine biosynthesis via choline pathway; betaine from betaine aldehyde: step 1/1. Functionally, involved in the biosynthesis of the osmoprotectant glycine betaine. Catalyzes the irreversible oxidation of betaine aldehyde to the corresponding acid. This is Betaine aldehyde dehydrogenase from Burkholderia mallei (strain SAVP1).